Here is a 61-residue protein sequence, read N- to C-terminus: Photosystem II reaction center protein K (61 aa).

The propeptide occupies 1–24 (MLNIFSLMYICLNSALYSSSFLFA). The chain crosses the membrane as a helical span at residues 40–60 (MPVIPVLFFLLAFVWQAAVSF).

The protein belongs to the PsbK family. PSII is composed of 1 copy each of membrane proteins PsbA, PsbB, PsbC, PsbD, PsbE, PsbF, PsbH, PsbI, PsbJ, PsbK, PsbL, PsbM, PsbT, PsbX, PsbY, PsbZ, Psb30/Ycf12, at least 3 peripheral proteins of the oxygen-evolving complex and a large number of cofactors. It forms dimeric complexes.

The protein localises to the plastid. The protein resides in the chloroplast thylakoid membrane. In terms of biological role, one of the components of the core complex of photosystem II (PSII). PSII is a light-driven water:plastoquinone oxidoreductase that uses light energy to abstract electrons from H(2)O, generating O(2) and a proton gradient subsequently used for ATP formation. It consists of a core antenna complex that captures photons, and an electron transfer chain that converts photonic excitation into a charge separation. In Citrus sinensis (Sweet orange), this protein is Photosystem II reaction center protein K.